Reading from the N-terminus, the 177-residue chain is Small ribosomal subunit protein uS5 (177 aa).

The region spanning Trp-19–Val-82 is the S5 DRBM domain.

The protein belongs to the universal ribosomal protein uS5 family. In terms of assembly, part of the 30S ribosomal subunit. Contacts proteins S4 and S8.

In terms of biological role, with S4 and S12 plays an important role in translational accuracy. Located at the back of the 30S subunit body where it stabilizes the conformation of the head with respect to the body. The chain is Small ribosomal subunit protein uS5 from Acaryochloris marina (strain MBIC 11017).